Here is a 209-residue protein sequence, read N- to C-terminus: Large ribosomal subunit protein uL3 (209 aa).

The tract at residues 118–152 is disordered; the sequence is GFQGAIKRHGQSRGPMSHGSRYHRRPGSMGPVDPN.

It belongs to the universal ribosomal protein uL3 family. In terms of assembly, part of the 50S ribosomal subunit. Forms a cluster with proteins L14 and L19.

In terms of biological role, one of the primary rRNA binding proteins, it binds directly near the 3'-end of the 23S rRNA, where it nucleates assembly of the 50S subunit. The chain is Large ribosomal subunit protein uL3 from Bacillus licheniformis (strain ATCC 14580 / DSM 13 / JCM 2505 / CCUG 7422 / NBRC 12200 / NCIMB 9375 / NCTC 10341 / NRRL NRS-1264 / Gibson 46).